The following is a 491-amino-acid chain: Angiopoietin-related protein 1 (491 aa).

An N-terminal signal peptide occupies residues 1–23; it reads MKTFTWTLGVLFFLLVDTGHCRG. Residues 80–168 are a coiled coil; sequence ITRMDLENLK…LNVTTEMLKM (89 aa). Residues Asn160 and Asn188 are each glycosylated (N-linked (GlcNAc...) asparagine). The region spanning 271 to 491 is the Fibrinogen C-terminal domain; sequence FINEGPFKDC…AVQMMIKPID (221 aa). Cystine bridges form between Cys280/Cys309 and Cys432/Cys445.

Highly expressed in adrenal gland, placenta, thyroid gland, heart, skeletal muscle and small intestine. Weakly expressed in testis, ovary, colon, pancreas, kidney and stomach.

Its subcellular location is the secreted. This Homo sapiens (Human) protein is Angiopoietin-related protein 1 (ANGPTL1).